A 135-amino-acid chain; its full sequence is Retinol-binding protein 5 (135 aa).

The protein belongs to the calycin superfamily. Fatty-acid binding protein (FABP) family.

The protein resides in the cytoplasm. Functionally, intracellular transport of retinol. This chain is Retinol-binding protein 5 (RBP5), found in Pongo abelii (Sumatran orangutan).